A 386-amino-acid chain; its full sequence is uncharacterized protein (386 aa).

The residue at position 185 (K185) is an N6-(pyridoxal phosphate)lysine.

The protein belongs to the DegT/DnrJ/EryC1 family. The cofactor is pyridoxal 5'-phosphate.

This is an uncharacterized protein from Methanocaldococcus jannaschii (strain ATCC 43067 / DSM 2661 / JAL-1 / JCM 10045 / NBRC 100440) (Methanococcus jannaschii).